Reading from the N-terminus, the 454-residue chain is Guanine deaminase (454 aa).

The Zn(2+) site is built by His82 and His84. Residues 84 to 87, 213 to 214, 240 to 243, and Asp330 contribute to the substrate site; these read HAPQ, RF, and HISE. Residues His240 and Asp330 each coordinate Zn(2+). Residue Ser453 is modified to Phosphoserine.

It belongs to the metallo-dependent hydrolases superfamily. ATZ/TRZ family. In terms of assembly, homodimer. It depends on Zn(2+) as a cofactor.

The catalysed reaction is guanine + H2O + H(+) = xanthine + NH4(+). Its pathway is purine metabolism; guanine degradation; xanthine from guanine: step 1/1. Functionally, catalyzes the hydrolytic deamination of guanine, producing xanthine and ammonia. In Mus musculus (Mouse), this protein is Guanine deaminase.